The following is a 533-amino-acid chain: Flavin-containing monooxygenase 5 (533 aa).

Arg5 is subject to Dimethylated arginine. Residues 10-14 (GGGVS), Glu33, and 41-42 (LW) each bind FAD. Phosphoserine is present on Ser54. Position 56 is a phosphotyrosine (Tyr56). Ser58 is modified (phosphoserine). 62-63 (NT) lines the FAD pocket. 196–199 (SGGD) serves as a coordination point for NADP(+). Ser280 carries the phosphoserine modification. Thr284 carries the post-translational modification Phosphothreonine. Ser401 is modified (phosphoserine). A helical membrane pass occupies residues 510-530 (MVSAVTTGCFMLAVVFFAIIM).

It belongs to the FMO family. FAD is required as a cofactor. Expressed in liver.

It is found in the microsome membrane. The protein resides in the endoplasmic reticulum membrane. The enzyme catalyses N,N-dimethylaniline + NADPH + O2 + H(+) = N,N-dimethylaniline N-oxide + NADP(+) + H2O. It catalyses the reaction NADPH + O2 + H(+) = H2O2 + NADP(+). It carries out the reaction heptan-2-one + NADPH + O2 + H(+) = pentyl acetate + NADP(+) + H2O. The catalysed reaction is octan-3-one + NADPH + O2 + H(+) = pentyl propanoate + NADP(+) + H2O. The enzyme catalyses octan-3-one + NADPH + O2 + H(+) = ethyl hexanoate + NADP(+) + H2O. It catalyses the reaction hexan-3-one + NADPH + O2 + H(+) = ethyl butanoate + NADP(+) + H2O. It carries out the reaction hexan-3-one + NADPH + O2 + H(+) = propyl propanoate + NADP(+) + H2O. The catalysed reaction is heptan-4-one + NADPH + O2 + H(+) = propyl butanoate + NADP(+) + H2O. The enzyme catalyses (2E)-geranial + NADPH + O2 + H(+) = (1E)-2,6-dimethylhepta-1,5-dien-1-yl formate + NADP(+) + H2O. It catalyses the reaction sulcatone + NADPH + O2 + H(+) = 4-methylpent-3-en-1-yl acetate + NADP(+) + H2O. In terms of biological role, acts as a Baeyer-Villiger monooxygenase on a broad range of substrates. Catalyzes the insertion of an oxygen atom into a carbon-carbon bond adjacent to a carbonyl, which converts ketones to esters. Active on diverse carbonyl compounds, whereas soft nucleophiles are mostly non- or poorly reactive. In contrast with other forms of FMO it is non- or poorly active on 'classical' substrates such as drugs, pesticides, and dietary components containing soft nucleophilic heteroatoms. Able to oxidize drug molecules bearing a carbonyl group on an aliphatic chain, such as nabumetone and pentoxifylline. Also, in the absence of substrates, shows slow but yet significant NADPH oxidase activity. Acts as a positive modulator of cholesterol biosynthesis as well as glucose homeostasis, promoting metabolic aging via pleiotropic effects. In Cavia porcellus (Guinea pig), this protein is Flavin-containing monooxygenase 5 (FMO5).